The primary structure comprises 617 residues: uncharacterized protein (617 aa).

Residues 103–123 (AGVLLAKFFPLLFLYPLTYLA) form a helical membrane-spanning segment. The 410-residue stretch at 200-609 (FETREPVGSG…DILEAAKPFL (410 aa)) folds into the Protein kinase domain. ATP contacts are provided by residues 206 to 214 (VGSGCVAQV) and Lys302. Residue Asp436 is the Proton acceptor of the active site.

Belongs to the protein kinase superfamily. ADCK protein kinase family.

It localises to the mitochondrion. The protein resides in the membrane. The function of this protein is not yet clear. It is not known if it has protein kinase activity and what type of substrate it would phosphorylate (Ser, Thr or Tyr). Involved in the mitochondrial import of CoQ precursors, plays a role in muscle mitochondrial function and fatty acid beta-oxidation. This is an uncharacterized protein from Mus musculus (Mouse).